The chain runs to 859 residues: DNA mismatch repair protein MutS (859 aa).

622-629 lines the ATP pocket; the sequence is GPNMGGKS.

Belongs to the DNA mismatch repair MutS family.

Functionally, this protein is involved in the repair of mismatches in DNA. It is possible that it carries out the mismatch recognition step. This protein has a weak ATPase activity. This chain is DNA mismatch repair protein MutS, found in Coxiella burnetii (strain RSA 493 / Nine Mile phase I).